The primary structure comprises 380 residues: Actin-like protein (380 aa).

This sequence belongs to the actin family. ARP1 subfamily.

The protein localises to the cytoplasm. It is found in the cytoskeleton. Involved in nuclear migration. May function as a component of the dynactin complex which activates force generation by cytoplasmic dynein. This chain is Actin-like protein (ro-4), found in Neurospora crassa (strain ATCC 24698 / 74-OR23-1A / CBS 708.71 / DSM 1257 / FGSC 987).